The following is a 344-amino-acid chain: L-rhamnose-proton symporter (344 aa).

10 helical membrane-spanning segments follow: residues A4 to A24, W38 to L58, L74 to M94, M101 to I121, T137 to L157, L175 to A195, L214 to I234, V259 to G279, I290 to L310, and V323 to A343.

Belongs to the L-rhamnose transporter (TC 2.A.7.6) family.

The protein localises to the cell inner membrane. It catalyses the reaction L-rhamnopyranose(in) + H(+)(in) = L-rhamnopyranose(out) + H(+)(out). Functionally, uptake of L-rhamnose across the cytoplasmic membrane with the concomitant transport of protons into the cell (symport system). The sequence is that of L-rhamnose-proton symporter from Escherichia coli (strain K12 / MC4100 / BW2952).